The primary structure comprises 399 residues: MLNIIKSKLNTTYKKKGLNDSSIAIYNRDVIPAVRNWKSSIYAYNKNAINLIPIKSKYVMKLIKAYFNLYNLQLESLLRKNRLRRRFRKISTNRIFISDGEFKHTNDKVNITLYVYNKQKLNYLLKLKKRYLTLFKKAKFARKLKLIKNVGLNILCKHKQKSILLSNLLPKYNTQVNTAQNIYYTRFIKKSFKRLKFYMYYKQMLYINKAKFENTYLQGLINLVRNIFNKNVEFNIINLKYFYFNSKIFTQPLELKLKKKRNVLRYLKVLIRKAKIKNVKLAEKSKKFFNFNIFNSDNFLQQDNTKSKYLKKIILSNLKYKRVSGVRLEAAGRLTRRFSASRSQRRTKYKGNLENVYSSFKGYPTPVLRGNDKANLQYTVINSTSRVGAFGVKGWISST.

It belongs to the universal ribosomal protein uS3 family.

Its subcellular location is the mitochondrion. Essential for mitochondrial protein synthesis and required for the maturation of small ribosomal subunits. In Penicillium urticae, this protein is Small ribosomal subunit protein uS3m.